Reading from the N-terminus, the 194-residue chain is Peptidyl-tRNA hydrolase (194 aa).

Tyrosine 16 contributes to the tRNA binding site. Catalysis depends on histidine 21, which acts as the Proton acceptor. The tRNA site is built by phenylalanine 67, asparagine 69, and asparagine 115.

The protein belongs to the PTH family. As to quaternary structure, monomer.

It is found in the cytoplasm. The catalysed reaction is an N-acyl-L-alpha-aminoacyl-tRNA + H2O = an N-acyl-L-amino acid + a tRNA + H(+). Its function is as follows. Hydrolyzes ribosome-free peptidyl-tRNAs (with 1 or more amino acids incorporated), which drop off the ribosome during protein synthesis, or as a result of ribosome stalling. In terms of biological role, catalyzes the release of premature peptidyl moieties from peptidyl-tRNA molecules trapped in stalled 50S ribosomal subunits, and thus maintains levels of free tRNAs and 50S ribosomes. This is Peptidyl-tRNA hydrolase from Citrobacter koseri (strain ATCC BAA-895 / CDC 4225-83 / SGSC4696).